A 563-amino-acid polypeptide reads, in one-letter code: Arginine--tRNA ligase (563 aa).

The protein belongs to the class-I aminoacyl-tRNA synthetase family. As to quaternary structure, monomer.

The enzyme catalyses tRNA(Arg) + L-arginine + ATP = L-arginyl-tRNA(Arg) + AMP + diphosphate. The protein is Arginine--tRNA ligase of Encephalitozoon cuniculi (strain GB-M1) (Microsporidian parasite).